The chain runs to 317 residues: Eukaryotic translation initiation factor 2 subunit 2 (317 aa).

Residues 1 to 146 form a disordered region; the sequence is MSATEEENVL…KEKTITTSDG (146 aa). A compositionally biased stretch (basic and acidic residues) spans 79–90; the sequence is AIEKLENEGAHD. Positions 109–125 are enriched in low complexity; sequence KSSTTTTTSTTTTTTEP. The C4-type zinc finger occupies 222–246; sequence HVYNYVFAELGTNGSIDGNQRLVIR.

It belongs to the eIF-2-beta/eIF-5 family. As to quaternary structure, eukaryotic translation initiation factor 2 eIF2 is a heterotrimeric complex composed of an alpha, a beta and a gamma subunit.

It is found in the cytoplasm. The protein resides in the cytosol. Functionally, component of the eIF2 complex that functions in the early steps of protein synthesis by forming a ternary complex with GTP and initiator tRNA. This complex binds to a 40S ribosomal subunit, followed by mRNA binding to form a 43S pre-initiation complex (43S PIC). Junction of the 60S ribosomal subunit to form the 80S initiation complex is preceded by hydrolysis of the GTP bound to eIF2 and release of an eIF2-GDP binary complex. In order for eIF2 to recycle and catalyze another round of initiation, the GDP bound to eIF2 must exchange with GTP by way of a reaction catalyzed by eIF2B. The chain is Eukaryotic translation initiation factor 2 subunit 2 (eif2s2) from Dictyostelium discoideum (Social amoeba).